Consider the following 308-residue polypeptide: Palmitoyltransferase ZDHHC7 (308 aa).

Over 1–50 the chain is Cytoplasmic; it reads MQPSGHRLRDIEHHPLLTDNDNYDSASSSSSEADMADRVWFIRDGCGMVC. A helical membrane pass occupies residues 51-71; sequence AVMTWLLVVYADFVVTFVMLL. Over 72–75 the chain is Lumenal; the sequence is PSKD. Residues 76-96 form a helical membrane-spanning segment; sequence FWYSVVNGVLFNCLAVLALSS. Residues 97–173 lie on the Cytoplasmic side of the membrane; it reads HLRTMLTDPG…NNCVGEKNQR (77 aa). Positions 130-180 constitute a DHHC domain; sequence YKCPKCCCIKPERAHHCSICKRCIRKMDHHCPWVNNCVGEKNQRFFVLFTM. Residue cysteine 160 is the S-palmitoyl cysteine intermediate of the active site. Residues 174–194 traverse the membrane as a helical segment; the sequence is FFVLFTMYIALSSIHALILCG. Residues 195-217 are Lumenal-facing; that stretch reads LQFISCVRGQWTECSDFSPPITV. A helical transmembrane segment spans residues 218 to 238; the sequence is ILLVFLCLEGLLFFTFTAVMF. Residues 239-308 lie on the Cytoplasmic side of the membrane; the sequence is GTQIHSICND…TRKGGPEFSV (70 aa).

The protein belongs to the DHHC palmitoyltransferase family. In terms of assembly, homooligomers. Heterooligomers with ZDHHC3. Post-translationally, autopalmitoylated. As to expression, widely expressed. Present in Sertoli cells (at protein level).

It localises to the golgi apparatus membrane. The enzyme catalyses L-cysteinyl-[protein] + hexadecanoyl-CoA = S-hexadecanoyl-L-cysteinyl-[protein] + CoA. It carries out the reaction L-cysteinyl-[protein] + tetradecanoyl-CoA = S-tetradecanoyl-L-cysteinyl-[protein] + CoA. The catalysed reaction is L-cysteinyl-[protein] + octadecanoyl-CoA = S-octadecanoyl-L-cysteinyl-[protein] + CoA. Functionally, golgi-localized palmitoyltransferase that catalyzes the addition of palmitate onto various protein substrates and therefore functions in several unrelated biological processes. Has no stringent fatty acid selectivity and in addition to palmitate can also transfer onto target proteins myristate from tetradecanoyl-CoA and stearate from octadecanoyl-CoA. Palmitoylates sex steroid hormone receptors, including ESR1, PGR and AR, thereby regulating their targeting to the plasma membrane and their function in rapid intracellular signaling upon binding of sex hormones. Palmitoylates GNAQ, a heterotrimeric G protein, regulating its dynamic localization at the plasma membrane and is thereby involved in GNAQ-dependent G protein-coupled receptor signaling pathways. Also functions in ligand-induced cell death by regulating the FAS signaling pathway through the palmitoylation and stabilization of the receptor at the plasma membrane. In epithelial cells, palmitoylates SCRIB and regulates its localization to the plasma membrane, regulating indirectly cell polarity and differentiation. Also palmitoylates JAM3 and promotes its expression at tight junctions and regulates its function in cell migration. Palmitoylates the glucose transporter GLUT4/SLC2A4 and controls the insulin-dependent translocation of GLUT4 to the plasma membrane. In brain, could also palmitoylate SNAP25 and DLG4/PSD95. Could also palmitoylate DNAJC5 and regulate its localization to the Golgi membrane. Could also palmitoylate NCDN. May play a role in follicle stimulation hormone (FSH) activation of testicular Sertoli cells. Activates pyroptosis by catalyzing palmitoylation of gasdermin-D (GSDMD). The polypeptide is Palmitoyltransferase ZDHHC7 (Rattus norvegicus (Rat)).